The sequence spans 720 residues: Translation initiation factor IF-2 (720 aa).

Residues 48 to 138 (KKFKASQAKD…NEVEETKEMP (91 aa)) are disordered. 2 stretches are compositionally biased toward low complexity: residues 60–75 (KQNTQNNHQKSNNKQN) and 99–113 (KGKQQNKNNKTNKNQ). Residues 114 to 123 (KNNKNKKNNK) are compositionally biased toward basic residues. The region spanning 222–391 (ERPAVVTIMG…GLVAEVQELK (170 aa)) is the tr-type G domain. The interval 231 to 238 (GHVDHGKT) is G1. 231-238 (GHVDHGKT) provides a ligand contact to GTP. Residues 256 to 260 (GITQH) form a G2 region. A G3 region spans residues 277-280 (DTPG). Residues 277–281 (DTPGH) and 331–334 (NKID) contribute to the GTP site. A G4 region spans residues 331–334 (NKID). Residues 367-369 (SAL) are G5.

Belongs to the TRAFAC class translation factor GTPase superfamily. Classic translation factor GTPase family. IF-2 subfamily.

The protein resides in the cytoplasm. In terms of biological role, one of the essential components for the initiation of protein synthesis. Protects formylmethionyl-tRNA from spontaneous hydrolysis and promotes its binding to the 30S ribosomal subunits. Also involved in the hydrolysis of GTP during the formation of the 70S ribosomal complex. The sequence is that of Translation initiation factor IF-2 from Staphylococcus epidermidis (strain ATCC 35984 / DSM 28319 / BCRC 17069 / CCUG 31568 / BM 3577 / RP62A).